The chain runs to 473 residues: UDP-N-acetylmuramate--L-alanine ligase (473 aa).

Residue 122-128 (GTHGKTT) coordinates ATP.

It belongs to the MurCDEF family.

It is found in the cytoplasm. It carries out the reaction UDP-N-acetyl-alpha-D-muramate + L-alanine + ATP = UDP-N-acetyl-alpha-D-muramoyl-L-alanine + ADP + phosphate + H(+). The protein operates within cell wall biogenesis; peptidoglycan biosynthesis. Functionally, cell wall formation. The polypeptide is UDP-N-acetylmuramate--L-alanine ligase (Teredinibacter turnerae (strain ATCC 39867 / T7901)).